The following is a 184-amino-acid chain: Large ribosomal subunit protein uL15 (184 aa).

Residues 1–62 (MDLSSLRPAK…QMPMYRRLPK (62 aa)) form a disordered region. Positions 21–35 (RGPGSGNGTTAGKGN) are enriched in gly residues.

This sequence belongs to the universal ribosomal protein uL15 family. Part of the 50S ribosomal subunit.

Functionally, binds to the 23S rRNA. This is Large ribosomal subunit protein uL15 from Chlorobaculum parvum (strain DSM 263 / NCIMB 8327) (Chlorobium vibrioforme subsp. thiosulfatophilum).